A 265-amino-acid chain; its full sequence is Exosome complex component Rrp4 (265 aa).

Positions 65 to 137 constitute an S1 motif domain; that stretch reads GDNVIGKIVD…EVNNIDLTTK (73 aa). One can recognise a KH domain in the interval 147 to 205; that stretch reads KGGQIVKITPSRVPRVIGRGGSMINMIKKLTMTRIIVGQNGWIWVSGKNDALEKLAIEA. The tract at residues 241-265 is disordered; the sequence is EIPKLEEEPQGEDEVNGNDGEARGA.

This sequence belongs to the RRP4 family. In terms of assembly, component of the archaeal exosome complex. Forms a trimer of Rrp4 and/or Csl4 subunits. The trimer associates with a hexameric ring-like arrangement composed of 3 Rrp41-Rrp42 heterodimers.

Its subcellular location is the cytoplasm. Non-catalytic component of the exosome, which is a complex involved in RNA degradation. Increases the RNA binding and the efficiency of RNA degradation. Confers strong poly(A) specificity to the exosome. This is Exosome complex component Rrp4 from Pyrococcus abyssi (strain GE5 / Orsay).